We begin with the raw amino-acid sequence, 93 residues long: Pancreatic polypeptide prohormone (93 aa).

An N-terminal signal peptide occupies residues M1 to G29. Y65 is modified (tyrosine amide). Positions E89–E93 are excised as a propeptide.

Belongs to the NPY family.

It is found in the secreted. Hormone secreted by pancreatic cells that acts as a regulator of pancreatic and gastrointestinal functions probably by signaling through the G protein-coupled receptor NPY4R2. This chain is Pancreatic polypeptide prohormone (PPY), found in Canis lupus familiaris (Dog).